Here is a 467-residue protein sequence, read N- to C-terminus: Uronate isomerase (467 aa).

Belongs to the metallo-dependent hydrolases superfamily. Uronate isomerase family.

The enzyme catalyses D-glucuronate = D-fructuronate. It carries out the reaction aldehydo-D-galacturonate = keto-D-tagaturonate. It functions in the pathway carbohydrate metabolism; pentose and glucuronate interconversion. In Haemophilus influenzae (strain PittGG), this protein is Uronate isomerase.